The chain runs to 387 residues: Putative transmembrane protein At3g54730 (387 aa).

The segment covering 10 to 25 (PAPPLLLPSPNPPPCA) has biased composition (pro residues). Residues 10–45 (PAPPLLLPSPNPPPCALPQDLTSLVSPSEPPDPPDP) are disordered. 8 helical membrane passes run 97-117 (VFPLACLELWFSIPHLSHPLV), 128-148 (GSNFFEFFTFFWNMPSFILQF), 154-174 (VMISTSFRLVLPQYEAVMILL), 186-206 (VLFSIGLRIQLLLPQYEVGLI), 221-241 (IQKLWLRAIHVIVSLVWFLEI), 292-312 (SWCFVAYAIVAVFHDAFYPLE), 335-355 (FSTIGVSNFSCLTVMYVFIFF), and 362-382 (PFVAVVSLAFVASLMYLLNHF).

The protein localises to the membrane. The protein is Putative transmembrane protein At3g54730 of Arabidopsis thaliana (Mouse-ear cress).